The sequence spans 330 residues: Beta-ketoacyl-[acyl-carrier-protein] synthase III (330 aa).

Active-site residues include Cys116 and His257. The interval 258–262 is ACP-binding; that stretch reads QANQR. Residue Asn287 is part of the active site.

It belongs to the thiolase-like superfamily. FabH family. In terms of assembly, homodimer.

The protein resides in the cytoplasm. It carries out the reaction malonyl-[ACP] + acetyl-CoA + H(+) = 3-oxobutanoyl-[ACP] + CO2 + CoA. The protein operates within lipid metabolism; fatty acid biosynthesis. In terms of biological role, catalyzes the condensation reaction of fatty acid synthesis by the addition to an acyl acceptor of two carbons from malonyl-ACP. Catalyzes the first condensation reaction which initiates fatty acid synthesis and may therefore play a role in governing the total rate of fatty acid production. Possesses both acetoacetyl-ACP synthase and acetyl transacylase activities. Its substrate specificity determines the biosynthesis of branched-chain and/or straight-chain of fatty acids. The chain is Beta-ketoacyl-[acyl-carrier-protein] synthase III from Synechocystis sp. (strain ATCC 27184 / PCC 6803 / Kazusa).